We begin with the raw amino-acid sequence, 190 residues long: Cytoplasmic envelopment protein 3 (190 aa).

Residue Gly2 is the site of N-myristoyl glycine; by host attachment. The interval 27-190 (RQVSLRSYDN…TKKPAASLPF (164 aa)) is disordered. Positions 30–43 (SLRSYDNIPPTSSS) are enriched in polar residues. Acidic residues predominate over residues 44–58 (DEGEDDDDGEDDDNE). Basic and acidic residues predominate over residues 80–90 (SHREATHDGSK). Positions 108-123 (KQSKKKKKPSKHHHHQ) are enriched in basic residues. Positions 130-139 (ETDDLDEEDT) are enriched in acidic residues.

It belongs to the herpesviridae cytoplasmic envelopment protein 3 family. Interacts with cytoplasmic envelopment protein 2; this interaction is essential for the proper localization of each protein to the assembly complex and thus for the production of infectious virus. Myristoylation and palmitoylation (probably on one or more of the nearby cysteines at the N-terminus) enable membrane-binding and Golgi apparatus-specific targeting and are essential for efficient packaging. In terms of processing, phosphorylated. Phosphorylation does not seem to be required for recycling to the host Golgi apparatus. Packaging is selective for underphosphorylated forms.

It localises to the virion tegument. The protein localises to the virion membrane. The protein resides in the host cell membrane. It is found in the host Golgi apparatus membrane. Functionally, plays an important role in the cytoplasmic envelopment of tegument proteins and capsids during the assembly and egress processes. Also participates in viral entry at the fusion step probably by regulating the core fusion machinery. The polypeptide is Cytoplasmic envelopment protein 3 (UL99) (Human cytomegalovirus (strain AD169) (HHV-5)).